We begin with the raw amino-acid sequence, 121 residues long: UPF0102 protein BDI_2565 (121 aa).

Belongs to the UPF0102 family.

The polypeptide is UPF0102 protein BDI_2565 (Parabacteroides distasonis (strain ATCC 8503 / DSM 20701 / CIP 104284 / JCM 5825 / NCTC 11152)).